The chain runs to 476 residues: Aspartyl/glutamyl-tRNA(Asn/Gln) amidotransferase subunit B (476 aa).

The protein belongs to the GatB/GatE family. GatB subfamily. Heterotrimer of A, B and C subunits.

The catalysed reaction is L-glutamyl-tRNA(Gln) + L-glutamine + ATP + H2O = L-glutaminyl-tRNA(Gln) + L-glutamate + ADP + phosphate + H(+). It catalyses the reaction L-aspartyl-tRNA(Asn) + L-glutamine + ATP + H2O = L-asparaginyl-tRNA(Asn) + L-glutamate + ADP + phosphate + 2 H(+). Functionally, allows the formation of correctly charged Asn-tRNA(Asn) or Gln-tRNA(Gln) through the transamidation of misacylated Asp-tRNA(Asn) or Glu-tRNA(Gln) in organisms which lack either or both of asparaginyl-tRNA or glutaminyl-tRNA synthetases. The reaction takes place in the presence of glutamine and ATP through an activated phospho-Asp-tRNA(Asn) or phospho-Glu-tRNA(Gln). The polypeptide is Aspartyl/glutamyl-tRNA(Asn/Gln) amidotransferase subunit B (Shouchella clausii (strain KSM-K16) (Alkalihalobacillus clausii)).